The primary structure comprises 226 residues: Aspartyl protease inhibitor (226 aa).

An N-terminal signal peptide occupies residues 1–15 (MKLLFLCALIALTAA). Disordered regions lie at residues 95 to 116 (GKKG…KKPS) and 196 to 218 (EAKQ…QPNV). A disulfide bridge links Cys131 with Cys222.

This sequence belongs to the protease inhibitor I33 family.

The protein localises to the secreted. Functionally, aspartyl protease inhibitor. This chain is Aspartyl protease inhibitor, found in Parelaphostrongylus tenuis (Meningeal worm).